We begin with the raw amino-acid sequence, 132 residues long: Protein NrdI (132 aa).

The protein belongs to the NrdI family.

Its function is as follows. Probably involved in ribonucleotide reductase function. The sequence is that of Protein NrdI from Bartonella quintana (strain Toulouse) (Rochalimaea quintana).